The following is a 204-amino-acid chain: UPF0301 protein Mflv_0850 (204 aa).

This sequence belongs to the UPF0301 (AlgH) family.

The sequence is that of UPF0301 protein Mflv_0850 from Mycolicibacterium gilvum (strain PYR-GCK) (Mycobacterium gilvum (strain PYR-GCK)).